The following is a 282-amino-acid chain: 2-dehydro-3-deoxyphosphooctonate aldolase (282 aa).

Belongs to the KdsA family.

It localises to the cytoplasm. The enzyme catalyses D-arabinose 5-phosphate + phosphoenolpyruvate + H2O = 3-deoxy-alpha-D-manno-2-octulosonate-8-phosphate + phosphate. Its pathway is carbohydrate biosynthesis; 3-deoxy-D-manno-octulosonate biosynthesis; 3-deoxy-D-manno-octulosonate from D-ribulose 5-phosphate: step 2/3. The protein operates within bacterial outer membrane biogenesis; lipopolysaccharide biosynthesis. The protein is 2-dehydro-3-deoxyphosphooctonate aldolase of Shewanella amazonensis (strain ATCC BAA-1098 / SB2B).